The chain runs to 211 residues: Uracil phosphoribosyltransferase (211 aa).

5-phospho-alpha-D-ribose 1-diphosphate contacts are provided by residues R78, R103, and 130-138 (DPMLATGGS). Uracil contacts are provided by residues I193 and 198 to 200 (GDA). D199 contacts 5-phospho-alpha-D-ribose 1-diphosphate.

This sequence belongs to the UPRTase family. Mg(2+) is required as a cofactor.

It catalyses the reaction UMP + diphosphate = 5-phospho-alpha-D-ribose 1-diphosphate + uracil. It functions in the pathway pyrimidine metabolism; UMP biosynthesis via salvage pathway; UMP from uracil: step 1/1. With respect to regulation, allosterically activated by GTP. Functionally, catalyzes the conversion of uracil and 5-phospho-alpha-D-ribose 1-diphosphate (PRPP) to UMP and diphosphate. This Hahella chejuensis (strain KCTC 2396) protein is Uracil phosphoribosyltransferase.